The chain runs to 453 residues: Calcium-binding tyrosine phosphorylation-regulated protein (453 aa).

In terms of domain architecture, RIIa spans 12–49 (YGLKTLLEGVSRAILKTNPTNITQFAAVYFKELIVFRE). 3 disordered regions span residues 86–165 (PIKP…PVSA), 246–278 (PVSE…QVTS), and 406–453 (IINP…PEQV). The span at 143–154 (DKPTTPKTDYTP) shows a compositional bias: low complexity.

Interacts with FSCB. In terms of processing, phosphorylated on tyrosine residues during in vitro capacitation. Dephosphorylation affects its ability to bind calcium. In terms of tissue distribution, expressed in spermatozoa.

It localises to the cytoplasm. The protein resides in the cytoskeleton. Its subcellular location is the cell projection. The protein localises to the cilium. It is found in the flagellum. Functionally, may function as a regulator of both motility- and head-associated functions such as capacitation and the acrosome reaction. May bind calcium in vitro. In Mus musculus (Mouse), this protein is Calcium-binding tyrosine phosphorylation-regulated protein (Cabyr).